The sequence spans 203 residues: Kunitz trypsin inhibitor 6 (203 aa).

The signal sequence occupies residues 1–21; the sequence is MKTFQLMMISFLFVAITTTSG. A disulfide bond links cysteine 70 and cysteine 115. Residues asparagine 94, asparagine 127, asparagine 136, asparagine 144, and asparagine 197 are each glycosylated (N-linked (GlcNAc...) asparagine).

It belongs to the protease inhibitor I3 (leguminous Kunitz-type inhibitor) family.

In terms of biological role, exhibits Kunitz trypsin protease inhibitor activity. The sequence is that of Kunitz trypsin inhibitor 6 from Arabidopsis thaliana (Mouse-ear cress).